A 183-amino-acid polypeptide reads, in one-letter code: Anterior gradient protein 1 (183 aa).

Residues Met1 to Gly18 form the signal peptide.

Belongs to the AGR family. In terms of tissue distribution, from stage 18 (neurula) onward, expressed in the cement gland until it degenerates. More weakly expressed in the adjacent hatching gland.

It localises to the secreted. Its function is as follows. Does not appear to be required for cement gland formation. The sequence is that of Anterior gradient protein 1 (ag1) from Xenopus laevis (African clawed frog).